The sequence spans 329 residues: Phosphate acyltransferase (329 aa).

The protein belongs to the PlsX family. Homodimer. Probably interacts with PlsY.

The protein localises to the cytoplasm. The enzyme catalyses a fatty acyl-[ACP] + phosphate = an acyl phosphate + holo-[ACP]. It functions in the pathway lipid metabolism; phospholipid metabolism. Functionally, catalyzes the reversible formation of acyl-phosphate (acyl-PO(4)) from acyl-[acyl-carrier-protein] (acyl-ACP). This enzyme utilizes acyl-ACP as fatty acyl donor, but not acyl-CoA. The sequence is that of Phosphate acyltransferase from Anoxybacillus flavithermus (strain DSM 21510 / WK1).